The chain runs to 282 residues: 2-dehydro-3-deoxyphosphooctonate aldolase (282 aa).

The protein belongs to the KdsA family.

The protein localises to the cytoplasm. The enzyme catalyses D-arabinose 5-phosphate + phosphoenolpyruvate + H2O = 3-deoxy-alpha-D-manno-2-octulosonate-8-phosphate + phosphate. It functions in the pathway carbohydrate biosynthesis; 3-deoxy-D-manno-octulosonate biosynthesis; 3-deoxy-D-manno-octulosonate from D-ribulose 5-phosphate: step 2/3. Its pathway is bacterial outer membrane biogenesis; lipopolysaccharide biosynthesis. In Shewanella pealeana (strain ATCC 700345 / ANG-SQ1), this protein is 2-dehydro-3-deoxyphosphooctonate aldolase.